Consider the following 118-residue polypeptide: Holo-[acyl-carrier-protein] synthase (118 aa).

Positions 9 and 52 each coordinate Mg(2+).

This sequence belongs to the P-Pant transferase superfamily. AcpS family. The cofactor is Mg(2+).

It localises to the cytoplasm. It catalyses the reaction apo-[ACP] + CoA = holo-[ACP] + adenosine 3',5'-bisphosphate + H(+). Its function is as follows. Transfers the 4'-phosphopantetheine moiety from coenzyme A to a Ser of acyl-carrier-protein. The chain is Holo-[acyl-carrier-protein] synthase from Frankia alni (strain DSM 45986 / CECT 9034 / ACN14a).